Reading from the N-terminus, the 1875-residue chain is Soluble starch synthase 3a, chloroplastic/amyloplastic (1875 aa).

The N-terminal 49 residues, 1-49 (MEMALRPQSLLCPRSRLKVVIRPASSASGGGLAQYFLMTRRYTGSRIVR), are a transit peptide targeting the chloroplast. Positions 1007 to 1065 (KRELERVATEEAERRRHAEEQQRMGEQRAAEQAAREQAKKEIELKKNKLQNLLSSARTH) form a coiled coil. Positions 1014–1043 (ATEEAERRRHAEEQQRMGEQRAAEQAAREQ) are disordered.

This sequence belongs to the glycosyltransferase 1 family. Bacterial/plant glycogen synthase subfamily. Expressed in the endosperm.

The protein resides in the plastid. It is found in the chloroplast. The protein localises to the amyloplast. The catalysed reaction is [(1-&gt;4)-alpha-D-glucosyl](n) + ADP-alpha-D-glucose = [(1-&gt;4)-alpha-D-glucosyl](n+1) + ADP + H(+). It participates in glycan biosynthesis; starch biosynthesis. Its function is as follows. Involved in starch synthesis in endosperm amyloplasts. Plays an important role in the elongation of amylopectin B chains. The protein is Soluble starch synthase 3a, chloroplastic/amyloplastic of Oryza sativa subsp. japonica (Rice).